The following is a 711-amino-acid chain: Polyribonucleotide nucleotidyltransferase (711 aa).

Mg(2+)-binding residues include Asp486 and Asp492. Residues Pro553 to Ile612 form the KH domain. The S1 motif domain maps to Gly622 to Lys690. The disordered stretch occupies residues Lys690 to Glu711. A compositionally biased stretch (low complexity) spans Glu694–Glu711.

This sequence belongs to the polyribonucleotide nucleotidyltransferase family. In terms of assembly, component of the RNA degradosome, which is a multiprotein complex involved in RNA processing and mRNA degradation. Mg(2+) serves as cofactor.

It localises to the cytoplasm. It catalyses the reaction RNA(n+1) + phosphate = RNA(n) + a ribonucleoside 5'-diphosphate. In terms of biological role, involved in mRNA degradation. Catalyzes the phosphorolysis of single-stranded polyribonucleotides processively in the 3'- to 5'-direction. This is Polyribonucleotide nucleotidyltransferase from Shigella dysenteriae serotype 1 (strain Sd197).